Reading from the N-terminus, the 205-residue chain is Dephospho-CoA kinase (205 aa).

The DPCK domain occupies 7–204; the sequence is LVGLTGGIGS…ARYLAAARAT (198 aa). 15–20 provides a ligand contact to ATP; sequence GSGKSA.

This sequence belongs to the CoaE family.

It is found in the cytoplasm. The catalysed reaction is 3'-dephospho-CoA + ATP = ADP + CoA + H(+). It functions in the pathway cofactor biosynthesis; coenzyme A biosynthesis; CoA from (R)-pantothenate: step 5/5. In terms of biological role, catalyzes the phosphorylation of the 3'-hydroxyl group of dephosphocoenzyme A to form coenzyme A. The protein is Dephospho-CoA kinase of Aromatoleum aromaticum (strain DSM 19018 / LMG 30748 / EbN1) (Azoarcus sp. (strain EbN1)).